The sequence spans 99 residues: Putative septation protein SpoVG (99 aa).

Belongs to the SpoVG family.

Functionally, could be involved in septation. The polypeptide is Putative septation protein SpoVG (Exiguobacterium sp. (strain ATCC BAA-1283 / AT1b)).